A 155-amino-acid chain; its full sequence is 17.6 kDa class II heat shock protein (155 aa).

Residues 38–155 (DAKAMAATPA…KPKTIQVQVA (118 aa)) form the sHSP domain.

Belongs to the small heat shock protein (HSP20) family. As to quaternary structure, may form oligomeric structures.

The protein resides in the cytoplasm. The chain is 17.6 kDa class II heat shock protein (HSP17.6) from Arabidopsis thaliana (Mouse-ear cress).